Consider the following 129-residue polypeptide: Glycine cleavage system H protein (129 aa).

In terms of domain architecture, Lipoyl-binding spans 24–106 (SYTVGITEHA…YGEGWFFRVM (83 aa)). Residue Lys65 is modified to N6-lipoyllysine.

It belongs to the GcvH family. As to quaternary structure, the glycine cleavage system is composed of four proteins: P, T, L and H. It depends on (R)-lipoate as a cofactor.

The glycine cleavage system catalyzes the degradation of glycine. The H protein shuttles the methylamine group of glycine from the P protein to the T protein. This is Glycine cleavage system H protein from Shewanella sp. (strain MR-7).